A 301-amino-acid chain; its full sequence is GTPase Era (301 aa).

Residues 7-175 (YCGFIAIVGR…AAIVRKHLPE (169 aa)) enclose the Era-type G domain. The G1 stretch occupies residues 15 to 22 (GRPNVGKS). Residue 15–22 (GRPNVGKS) participates in GTP binding. Residues 41-45 (QTTRH) form a G2 region. The interval 62–65 (DTPG) is G3. Residues 62–66 (DTPGL) and 124–127 (NKVD) each bind GTP. The interval 124–127 (NKVD) is G4. Positions 154–156 (ISA) are G5. The 78-residue stretch at 206 to 283 (LGAELPYSVT…HLELWVKVKS (78 aa)) folds into the KH type-2 domain.

The protein belongs to the TRAFAC class TrmE-Era-EngA-EngB-Septin-like GTPase superfamily. Era GTPase family. In terms of assembly, monomer.

Its subcellular location is the cytoplasm. It is found in the cell inner membrane. In terms of biological role, an essential GTPase that binds both GDP and GTP, with rapid nucleotide exchange. Plays a role in 16S rRNA processing and 30S ribosomal subunit biogenesis and possibly also in cell cycle regulation and energy metabolism. The chain is GTPase Era from Shigella dysenteriae serotype 1 (strain Sd197).